The primary structure comprises 144 residues: D-aminoacyl-tRNA deacylase (144 aa).

Positions 136–137 (GP) match the Gly-cisPro motif, important for rejection of L-amino acids motif.

It belongs to the DTD family. Homodimer.

The protein localises to the cytoplasm. It carries out the reaction glycyl-tRNA(Ala) + H2O = tRNA(Ala) + glycine + H(+). The catalysed reaction is a D-aminoacyl-tRNA + H2O = a tRNA + a D-alpha-amino acid + H(+). In terms of biological role, an aminoacyl-tRNA editing enzyme that deacylates mischarged D-aminoacyl-tRNAs. Also deacylates mischarged glycyl-tRNA(Ala), protecting cells against glycine mischarging by AlaRS. Acts via tRNA-based rather than protein-based catalysis; rejects L-amino acids rather than detecting D-amino acids in the active site. By recycling D-aminoacyl-tRNA to D-amino acids and free tRNA molecules, this enzyme counteracts the toxicity associated with the formation of D-aminoacyl-tRNA entities in vivo and helps enforce protein L-homochirality. The protein is D-aminoacyl-tRNA deacylase of Vibrio parahaemolyticus serotype O3:K6 (strain RIMD 2210633).